A 456-amino-acid polypeptide reads, in one-letter code: Carnosine N-methyltransferase unmet (456 aa).

S-adenosyl-L-methionine is bound by residues Arg-154, Gly-195, Glu-216, Asp-282, Phe-283, and Cys-299. 3 residues coordinate carnosine: Asp-303, His-334, and Tyr-385. Residues 402 to 418 (RGKRKASREPHDLIVRE) are compositionally biased toward basic and acidic residues. The segment at 402–456 (RGKRKASREPHDLIVREDSEEEGEQQPERNETEEKQQLKPLATANCETEIKEQPS) is disordered. 2 positions are modified to phosphoserine: Ser-408 and Ser-420. The span at 427 to 438 (QPERNETEEKQQ) shows a compositional bias: basic and acidic residues.

This sequence belongs to the carnosine N-methyltransferase family. As to quaternary structure, associates with the GATOR2 complex; the interaction is probably direct and is inhibited by S-adenosyl-L-methionine binding. Associates with the GATOR1 complex; the interaction is probably indirect and mediated by the GATOR2 complex.

It carries out the reaction carnosine + S-adenosyl-L-methionine = anserine + S-adenosyl-L-homocysteine + H(+). In terms of biological role, S-adenosyl-L-methionine-binding protein that acts as a sensor to signal methionine availability to the mTORC1 signaling pathway. Associates with the GATOR2 complex in the absence of methionine to inhibit mTORC1 signaling, but dissociates in the presence of the methionine derivative S-adenosyl-L-methionine; S-adenosyl-L-homocysteine binding does not induce dissociation. Required for mTORC1 pathway response to methionine starvation. Exerts a protective function on developing egg chambers by inhibiting mTORC1 signaling under starvation conditions. May also function as a N-methyltransferase that mediates the formation of anserine (beta-alanyl-N(Pi)-methyl-L-histidine) from carnosine. It is unclear whether this protein has retained N-methyltransferase activity or if it is an evolutionary intermediate whose substrate binding ability has been co-opted to function as a nutrient sensor for mTORC1 signaling. The polypeptide is Carnosine N-methyltransferase unmet (Drosophila melanogaster (Fruit fly)).